Consider the following 862-residue polypeptide: Short transient receptor potential channel 7 (862 aa).

The disordered stretch occupies residues 1–21 (MLRNSTFKNMQRRHTTLREKG). Residues 1 to 351 (MLRNSTFKNM…GLRQQSIAVK (351 aa)) are Cytoplasmic-facing. Positions 10–21 (MQRRHTTLREKG) are enriched in basic residues. Thr-15 carries the phosphothreonine; by PKG/PRKG1 modification. ANK repeat units follow at residues 42 to 71 (PEEE…TLNF), 77 to 106 (MGQN…LARV), 108 to 134 (DALL…FAQG), and 163 to 192 (HDIT…RIER). The chain crosses the membrane as a helical span at residues 352–372 (FLAVFGVSIGLPFLAIAYWIA). Topologically, residues 373 to 383 (PCSKLGRTLRS) are extracellular. Residues 384-404 (PFMKFVAHAVSFTIFLGLLVV) traverse the membrane as a helical segment. Topologically, residues 405–465 (NASDRFEGVK…KEIWEEGPRE (61 aa)) are cytoplasmic. The helical transmembrane segment at 466 to 486 (YVLHLWNLLDFGMLSIFVASF) threads the bilayer. Topologically, residues 487-537 (TARFMAFLKATEAQLYVDQHVQDDTLHNVSLPPEVAYFTYARDKWWPSDPQ) are extracellular. A glycan (N-linked (GlcNAc...) asparagine) is linked at Asn-514. Residues 538 to 558 (IISEGLYAIAVVLSFSRIAYI) traverse the membrane as a helical segment. The Cytoplasmic segment spans residues 559–581 (LPANESFGPLQISLGRTVKDIFK). A helical membrane pass occupies residues 582–602 (FMVIFIMVFVAFMIGMFNLYS). Residues 603–651 (YYRGAKYNPAFTTVEESFKTLFWSIFGLSEVISVVLKYDHKFIENIGYV) are Extracellular-facing. Residues 652–672 (LYGVYNVTMVVVLLNMLIAMI) form a helical membrane-spanning segment. At 673–862 (NNSYQEIEED…HLRVNKGKDI (190 aa)) the chain is on the cytoplasmic side.

This sequence belongs to the transient receptor (TC 1.A.4) family. STrpC subfamily. TRPC7 sub-subfamily. In terms of assembly, interacts with MX1 and RNF24. Interacts (via ANK-repeat domains) with PRKG1. In terms of processing, phosphorylation by PRKG1 at Thr-15 negatively regulates TRPC7 activity.

The protein resides in the cell membrane. It is found in the nucleus envelope. It carries out the reaction Ca(2+)(in) = Ca(2+)(out). In terms of biological role, forms a receptor-activated non-selective calcium permeant cation channel. Probably is operated by a phosphatidylinositol second messenger system activated by receptor tyrosine kinases or G-protein coupled receptors. Activated by diacylglycerol (DAG). May also be activated by intracellular calcium store depletion. In Homo sapiens (Human), this protein is Short transient receptor potential channel 7 (TRPC7).